A 218-amino-acid chain; its full sequence is Enhancer of split M2 protein (218 aa).

Low complexity predominate over residues 1 to 25; that stretch reads MYLDTKNLTASSTSALTAATASNSK. Disordered stretches follow at residues 1–30, 64–86, and 137–164; these read MYLD…TRRM, NTQQ…KSTP, and GRNC…SSSA. Residues 147-163 are compositionally biased toward low complexity; sequence SSNINSSSSSSNMNSSS.

Its function is as follows. Part of the Notch signaling pathway. The sequence is that of Enhancer of split M2 protein from Drosophila melanogaster (Fruit fly).